Consider the following 88-residue polypeptide: UPF0335 protein NGR_c28390 (88 aa).

Belongs to the UPF0335 family.

This chain is UPF0335 protein NGR_c28390, found in Sinorhizobium fredii (strain NBRC 101917 / NGR234).